A 272-amino-acid polypeptide reads, in one-letter code: uncharacterized protein (272 aa).

Active-site residues include aspartate 71 and glutamate 163.

Belongs to the glycosyl hydrolase 25 family.

This is an uncharacterized protein from Escherichia coli O6:H1 (strain CFT073 / ATCC 700928 / UPEC).